Here is a 300-residue protein sequence, read N- to C-terminus: Cation-efflux pump FieF (300 aa).

The next 4 helical transmembrane spans lie at 11–31 (LAAVSATAVALVLFVMKVFAW), 40–60 (LASLVDSLVDIAASLVNLLVV), 81–101 (LAALAQSMFISGSALFLILTG), and 114–134 (PEVGMWVTLIALVATLLLVSF). 2 residues coordinate Zn(2+): Asp-45 and Asp-49. Zn(2+) is bound by residues His-153 and Asp-157. The next 2 membrane-spanning stretches (helical) occupy residues 156-176 (SDLLMNGAILVALALSWKGIT) and 182-202 (FALGIGVYILYSALRMGYDAV).

The protein belongs to the cation diffusion facilitator (CDF) transporter (TC 2.A.4) family. FieF subfamily. In terms of assembly, homodimer.

Its subcellular location is the cell inner membrane. The catalysed reaction is Zn(2+)(in) + H(+)(out) = Zn(2+)(out) + H(+)(in). It catalyses the reaction Cd(2+)(in) + H(+)(out) = Cd(2+)(out) + H(+)(in). It carries out the reaction Fe(2+)(in) + H(+)(out) = Fe(2+)(out) + H(+)(in). Divalent metal cation transporter which exports Zn(2+), Cd(2+) and possibly Fe(2+). May be involved in zinc and iron detoxification by efflux. This chain is Cation-efflux pump FieF, found in Pectobacterium atrosepticum (strain SCRI 1043 / ATCC BAA-672) (Erwinia carotovora subsp. atroseptica).